Here is a 337-residue protein sequence, read N- to C-terminus: Bifunctional methylenetetrahydrofolate dehydrogenase/cyclohydrolase, mitochondrial (337 aa).

A mitochondrion-targeting transit peptide spans 1–30 (MATALCPLRALGQTAFRPRTRRLHLSAPRA). Substrate-binding positions include 79–83 (YVLNK) and 126–128 (VQL). Residues 195–197 (GRS) and Arg228 contribute to the NAD(+) site. 304 to 308 (PGGVG) contributes to the substrate binding site.

Belongs to the tetrahydrofolate dehydrogenase/cyclohydrolase family. Mg(2+) is required as a cofactor.

It is found in the mitochondrion. The catalysed reaction is (6R)-5,10-methylene-5,6,7,8-tetrahydrofolate + NAD(+) = (6R)-5,10-methenyltetrahydrofolate + NADH. It catalyses the reaction (6R)-5,10-methenyltetrahydrofolate + H2O = (6R)-10-formyltetrahydrofolate + H(+). In terms of biological role, although its dehydrogenase activity is NAD-specific, it can also utilize NADP at a reduced efficiency. This Gallus gallus (Chicken) protein is Bifunctional methylenetetrahydrofolate dehydrogenase/cyclohydrolase, mitochondrial (MTHFD2).